Consider the following 625-residue polypeptide: Grainyhead-like protein 2 homolog (625 aa).

The transcription activation stretch occupies residues 1-93; it reads MSQESDNNKR…KASDSQEDQD (93 aa). 2 disordered regions span residues 198–222 and 428–452; these read ASHSSYLKDDQRSTPDSTYSESFKD and EERKQNRKKGKGQASQAQCNNSSDG. The 239-residue stretch at 244–482 folds into the Grh/CP2 DB domain; the sequence is GSGTFQYTLE…DLHSQPVLFI (239 aa). The segment covering 440 to 451 has biased composition (polar residues); sequence QASQAQCNNSSD.

Belongs to the grh/CP2 family. Grainyhead subfamily. In terms of assembly, homodimer, also forms heterodimers with GRHL1 or GRHL3.

The protein resides in the nucleus. It is found in the membrane. Functionally, transcription factor playing an important role in primary neurulation and in epithelial development. Binds directly to the consensus DNA sequence 5'-AACCGGTT-3' acting as an activator and repressor on distinct target genes. During embryogenesis, plays unique and cooperative roles with GRHL3 in establishing distinct zones of primary neurulation. Essential for closure 3 (rostral end of the forebrain), functions cooperatively with GRHL3 in closure 2 (forebrain/midbrain boundary) and posterior neuropore closure. Regulates epithelial morphogenesis acting as a target gene-associated transcriptional activator of apical junctional complex components. Up-regulates of CLDN3 and CLDN4, as well as of RAB25, which increases the CLDN4 protein and its localization at tight junctions. Comprises an essential component of the transcriptional machinery that establishes appropriate expression levels of CLDN4 and CDH1 in different types of epithelia. Exhibits functional redundancy with GRHL3 in epidermal morphogenetic events such as eyelid fusion and epidermal wound repair. In lung, forms a regulatory loop with NKX2-1 that coordinates lung epithelial cell morphogenesis and differentiation. In keratinocytes, plays a role in telomerase activation during cellular proliferation, regulates TERT expression by binding to TERT promoter region and inhibiting DNA methylation at the 5'-CpG island, possibly by interfering with DNMT1 enzyme activity. In addition, impairs keratinocyte differentiation and epidermal function by inhibiting the expression of genes clustered at the epidermal differentiation complex (EDC) as well as GRHL1 and GRHL3 through epigenetic mechanisms. This chain is Grainyhead-like protein 2 homolog (Grhl2), found in Mus musculus (Mouse).